Reading from the N-terminus, the 300-residue chain is Homoserine kinase (300 aa).

86–96 (PVARGLGSSAT) is an ATP binding site.

It belongs to the GHMP kinase family. Homoserine kinase subfamily.

It is found in the cytoplasm. It carries out the reaction L-homoserine + ATP = O-phospho-L-homoserine + ADP + H(+). The protein operates within amino-acid biosynthesis; L-threonine biosynthesis; L-threonine from L-aspartate: step 4/5. Functionally, catalyzes the ATP-dependent phosphorylation of L-homoserine to L-homoserine phosphate. The polypeptide is Homoserine kinase (Persephonella marina (strain DSM 14350 / EX-H1)).